The sequence spans 251 residues: Flap endonuclease Xni (251 aa).

Asp104 is a Mg(2+) binding site. Positions 160 to 249 (VQPQQLPDYW…IDGNLQQLRL (90 aa)) constitute a 5'-3' exonuclease domain. Positions 171, 172, 180, 182, and 185 each coordinate K(+). Residues 184–189 (GIGPKS) are interaction with DNA.

It belongs to the Xni family. It depends on Mg(2+) as a cofactor. K(+) serves as cofactor.

Has flap endonuclease activity. During DNA replication, flap endonucleases cleave the 5'-overhanging flap structure that is generated by displacement synthesis when DNA polymerase encounters the 5'-end of a downstream Okazaki fragment. This is Flap endonuclease Xni from Escherichia coli O81 (strain ED1a).